Consider the following 320-residue polypeptide: MQITFLGTSSGVPTRSRNVSSVALRLPQRAEVWLFDCGEATQHQILRSDVRLSQIRRIFITHMHGDHIFGLMGLLASCGLAGNVSRMDIYGPPGLNKYLEACQRYSQTHFSYPIRVHTVQPGVIYEDEEFTVSCTALHHRVTAFGYRVSEKDRPGRFDVQQAVALGIPSGPLYGQLKRGEQVTLADGRVIHGQQLCAPPELGRKLAYCTDTIYCEGAVELAQDVDVLIHEATFAHQDADMAYQRLHSTSTMAAQVALAAAAKRLFLTHFSPRYAPGNDLQIDNLLEEARAIFAPTELAYDFLTYELPRHLEPERQTLSVG.

Residues histidine 62, histidine 64, aspartate 66, histidine 67, histidine 139, aspartate 210, and histidine 268 each contribute to the Zn(2+) site. Aspartate 66 acts as the Proton acceptor in catalysis.

This sequence belongs to the RNase Z family. Homodimer. Zn(2+) is required as a cofactor.

The enzyme catalyses Endonucleolytic cleavage of RNA, removing extra 3' nucleotides from tRNA precursor, generating 3' termini of tRNAs. A 3'-hydroxy group is left at the tRNA terminus and a 5'-phosphoryl group is left at the trailer molecule.. Its function is as follows. Zinc phosphodiesterase, which displays some tRNA 3'-processing endonuclease activity. Probably involved in tRNA maturation, by removing a 3'-trailer from precursor tRNA. The protein is Ribonuclease Z of Cyanothece sp. (strain PCC 7425 / ATCC 29141).